Consider the following 411-residue polypeptide: Serine hydroxymethyltransferase (411 aa).

Residues Leu119 and 123 to 125 (GHL) each bind (6S)-5,6,7,8-tetrahydrofolate. Lys228 bears the N6-(pyridoxal phosphate)lysine mark. 351-353 (SPF) is a binding site for (6S)-5,6,7,8-tetrahydrofolate.

Belongs to the SHMT family. As to quaternary structure, homodimer. The cofactor is pyridoxal 5'-phosphate.

The protein localises to the cytoplasm. The catalysed reaction is (6R)-5,10-methylene-5,6,7,8-tetrahydrofolate + glycine + H2O = (6S)-5,6,7,8-tetrahydrofolate + L-serine. It functions in the pathway one-carbon metabolism; tetrahydrofolate interconversion. It participates in amino-acid biosynthesis; glycine biosynthesis; glycine from L-serine: step 1/1. Catalyzes the reversible interconversion of serine and glycine with tetrahydrofolate (THF) serving as the one-carbon carrier. This reaction serves as the major source of one-carbon groups required for the biosynthesis of purines, thymidylate, methionine, and other important biomolecules. Also exhibits THF-independent aldolase activity toward beta-hydroxyamino acids, producing glycine and aldehydes, via a retro-aldol mechanism. This chain is Serine hydroxymethyltransferase, found in Clostridium beijerinckii (strain ATCC 51743 / NCIMB 8052) (Clostridium acetobutylicum).